The chain runs to 202 residues: UPF0056 membrane protein CPn_1010/CP_0843/CPj1010/CpB1048 (202 aa).

Transmembrane regions (helical) follow at residues 7 to 27 (LSLL…FVAL), 39 to 59 (VILR…TFGR), 61 to 81 (FFQF…FLLF), 105 to 125 (PIFF…TALL), 137 to 157 (IIFT…LCSS), and 175 to 195 (FGIA…SIAF).

Belongs to the UPF0056 (MarC) family.

It is found in the cell membrane. The protein is UPF0056 membrane protein CPn_1010/CP_0843/CPj1010/CpB1048 of Chlamydia pneumoniae (Chlamydophila pneumoniae).